We begin with the raw amino-acid sequence, 304 residues long: Putative S-adenosyl-L-methionine-dependent methyltransferase MMAR_1057 (304 aa).

Residues aspartate 130 and 159-160 each bind S-adenosyl-L-methionine; that span reads DL.

Belongs to the UPF0677 family.

Functionally, exhibits S-adenosyl-L-methionine-dependent methyltransferase activity. The polypeptide is Putative S-adenosyl-L-methionine-dependent methyltransferase MMAR_1057 (Mycobacterium marinum (strain ATCC BAA-535 / M)).